The primary structure comprises 129 residues: Succinate dehydrogenase subunit 3-2, mitochondrial (129 aa).

The transit peptide at 1–58 (MEKYQSKARFAPLSDAPFALRGALGSSNSSFNNIDHLRQSSSSGQARSYTSSPLGALR) directs the protein to the mitochondrion. Residues 27 to 53 (SNSSFNNIDHLRQSSSSGQARSYTSSP) show a composition bias toward polar residues. The tract at residues 27–66 (SNSSFNNIDHLRQSSSSGQARSYTSSPLGALRPKMFPSGN) is disordered. Histidine 87 contributes to the heme binding site. A helical membrane pass occupies residues 105-127 (IFGAALGAVIISIPLATKFSLMF).

As to quaternary structure, component of complex II composed of eight subunits in plants: four classical SDH subunits SDH1, SDH2, SDH3 and SDH4 (a flavoprotein (FP), an iron-sulfur protein (IP), and a cytochrome b composed of a large and a small subunit.), as well as four subunits unknown in mitochondria from bacteria and heterotrophic eukaryotes. Requires heme as cofactor.

The protein resides in the mitochondrion inner membrane. The protein operates within carbohydrate metabolism; tricarboxylic acid cycle. Its function is as follows. Membrane-anchoring subunit of succinate dehydrogenase (SDH). The protein is Succinate dehydrogenase subunit 3-2, mitochondrial of Oryza sativa subsp. japonica (Rice).